A 137-amino-acid polypeptide reads, in one-letter code: Prostate and testis expressed protein 13 (137 aa).

An N-terminal signal peptide occupies residues 1–20; the sequence is MFQKLLLSVFIILLMDVGER. Positions 28 to 114 constitute a UPAR/Ly6 domain; sequence RHCNLCSHYD…CIDRNYCNDG (87 aa). 5 disulfide bridges follow: cysteine 30–cysteine 60, cysteine 33–cysteine 41, cysteine 48–cysteine 84, cysteine 87–cysteine 104, and cysteine 105–cysteine 111. A glycan (N-linked (GlcNAc...) asparagine) is linked at asparagine 57.

Belongs to the PATE family. As to expression, strongly expressed in the epididymis, including the initial segment, caput, corpus and cauda regions. Weakly expressed in prostate.

The protein localises to the secreted. The polypeptide is Prostate and testis expressed protein 13 (Mus musculus (Mouse)).